The sequence spans 446 residues: Histone acetyltransferase type B subunit 2 (446 aa).

5 WD repeats span residues 138-178 (DHPG…ITPS), 189-229 (GHKE…GTSK), 231-270 (LKYS…QIID), 286-326 (GHSD…SKVH), and 330-370 (GHQD…DEQT). Residues 372 to 376 (DDAED) are interaction with the histone H4 N-terminus. One copy of the WD 6 repeat lies at 387-427 (GHTNHLADFSWNRNDPWLVCSAAEDNLLQIWKVANSIVSKE). Residues 427 to 446 (EPADMSTPELDDPKPKQSSH) are disordered. The segment covering 437-446 (DDPKPKQSSH) has biased composition (basic and acidic residues).

Belongs to the WD repeat RBAP46/RBAP48/MSI1 family. Component of the HAT-B complex composed of at least hat-1 and hat-2. The HAT-B complex binds to histone H4 tail.

It is found in the cytoplasm. Its subcellular location is the nucleus. Regulatory subunit of the histone acetylase B (HAT-B) complex. The complex acetylates 'Lys-12' of histone H4 which is required for telomeric silencing. In Neurospora crassa (strain ATCC 24698 / 74-OR23-1A / CBS 708.71 / DSM 1257 / FGSC 987), this protein is Histone acetyltransferase type B subunit 2 (hat-2).